Reading from the N-terminus, the 91-residue chain is MARSLKKGPFCDHHLMAKVEEAVASGNNKAVIKTWSRRSTIFPNFIGLTFGVYNGKKHIPVHVTEQMVGHKLGEFAPTRTYHGHGVDKKKK.

This sequence belongs to the universal ribosomal protein uS19 family.

Protein S19 forms a complex with S13 that binds strongly to the 16S ribosomal RNA. This chain is Small ribosomal subunit protein uS19, found in Fusobacterium nucleatum subsp. nucleatum (strain ATCC 25586 / DSM 15643 / BCRC 10681 / CIP 101130 / JCM 8532 / KCTC 2640 / LMG 13131 / VPI 4355).